The chain runs to 245 residues: 7-cyano-7-deazaguanine synthase 2 (245 aa).

An ATP-binding site is contributed by 12-22 (FSGGQDSTTCL). C200, C215, C218, and C221 together coordinate Zn(2+).

Belongs to the QueC family. It depends on Zn(2+) as a cofactor.

The enzyme catalyses 7-carboxy-7-deazaguanine + NH4(+) + ATP = 7-cyano-7-deazaguanine + ADP + phosphate + H2O + H(+). It functions in the pathway purine metabolism; 7-cyano-7-deazaguanine biosynthesis. Catalyzes the ATP-dependent conversion of 7-carboxy-7-deazaguanine (CDG) to 7-cyano-7-deazaguanine (preQ(0)). This chain is 7-cyano-7-deazaguanine synthase 2, found in Mesorhizobium japonicum (strain LMG 29417 / CECT 9101 / MAFF 303099) (Mesorhizobium loti (strain MAFF 303099)).